Here is a 163-residue protein sequence, read N- to C-terminus: Ribosome maturation factor RimP (163 aa).

The protein belongs to the RimP family.

The protein resides in the cytoplasm. Required for maturation of 30S ribosomal subunits. In Bordetella petrii (strain ATCC BAA-461 / DSM 12804 / CCUG 43448), this protein is Ribosome maturation factor RimP.